Consider the following 609-residue polypeptide: UvrABC system protein C (609 aa).

The region spanning 15-92 (TGSGVYQMQD…IKQFRPRYNV (78 aa)) is the GIY-YIG domain. Residues 202–237 (DQVIIKLTERMEVASENLVFEEAAHYRDQIRQLRRL) enclose the UVR domain.

Belongs to the UvrC family. As to quaternary structure, interacts with UvrB in an incision complex.

The protein localises to the cytoplasm. Its function is as follows. The UvrABC repair system catalyzes the recognition and processing of DNA lesions. UvrC both incises the 5' and 3' sides of the lesion. The N-terminal half is responsible for the 3' incision and the C-terminal half is responsible for the 5' incision. The polypeptide is UvrABC system protein C (Coxiella burnetii (strain CbuG_Q212) (Coxiella burnetii (strain Q212))).